Reading from the N-terminus, the 497-residue chain is Probable malate:quinone oxidoreductase (497 aa).

The protein belongs to the MQO family. FAD serves as cofactor.

It carries out the reaction (S)-malate + a quinone = a quinol + oxaloacetate. It functions in the pathway carbohydrate metabolism; tricarboxylic acid cycle; oxaloacetate from (S)-malate (quinone route): step 1/1. This chain is Probable malate:quinone oxidoreductase, found in Rhodopseudomonas palustris (strain ATCC BAA-98 / CGA009).